The sequence spans 238 residues: Citrate-binding protein (238 aa).

The N-terminal stretch at 1–31 (MKMKRSPYCFCCSFALLLLVSFLKDRHFCSA) is a signal peptide. Residues 225-238 (LEGCNNNHGTWLVQ) constitute a propeptide, removed in mature form.

It is found in the vacuole. May be a subunit of a vacuolar malate and citrate transporter. In Hevea brasiliensis (Para rubber tree), this protein is Citrate-binding protein (CBP).